The primary structure comprises 535 residues: Proto-oncogene tyrosine-protein kinase Src (535 aa).

Positions 1 to 56 (MGSNKSKPKDASQRRRSLEPSENVHGAGGAFPASQTPSKPASADGHRGPSAAFVPP) are disordered. Gly2 carries the N-myristoyl glycine lipid modification. Residues 7 to 19 (KPKDASQRRRSLE) show a composition bias toward basic and acidic residues. 3 positions are modified to phosphoserine: Ser17, Ser21, and Ser74. One can recognise an SH3 domain in the interval 83-144 (GGVTTFVALY…PSNYVAPSDS (62 aa)). Positions 150 to 247 (WYFGKITRRE…GLCHRLTTVC (98 aa)) constitute an SH2 domain. Tyr186 carries the post-translational modification Phosphotyrosine. The Protein kinase domain occupies 269–522 (LRLEVKLGQG…YLQAFLEDYF (254 aa)). ATP contacts are provided by residues 275–283 (LGQGCFGEV) and Lys297. The active-site Proton acceptor is Asp388. Phosphotyrosine; by autocatalysis is present on Tyr418. Position 418 is a phosphotyrosine; by FAK2 (Tyr418). A Phosphotyrosine; by CSK modification is found at Tyr529.

This sequence belongs to the protein kinase superfamily. Tyr protein kinase family. SRC subfamily. In terms of assembly, part of a complex comprised of PTPRA, BCAR1, BCAR3 (via SH2 domain) and SRC; the formation of the complex is dependent on integrin mediated-tyrosine phosphorylation of PTPRA. Interacts with CDCP1, TGFB1I1 and TOM1L2. Interacts with DDEF1/ASAP1 via its SH3 domain. Interacts with CCPG1. Interacts with the cytoplasmic domain of MUC1, phosphorylates it and increases binding of MUC1 with beta-catenin. Interacts with RALGPS1 via its SH3 domain. Interacts with CAV2 (tyrosine phosphorylated form). Interacts (via the SH3 domain and the protein kinase domain) with ARRB1; the interaction is independent of the phosphorylation state of SRC C-terminus. Interacts with FCAMR and PXN. Interacts with ARRB2. Interacts with ARRB1. Interacts with SRCIN1. Interacts with NDFIP2 and more weakly with NDFIP1. Interacts with PIK3CA and/or PIK3C2B, PTK2/FAK1, ESR1 (dimethylated on arginine) and FAK. Interacts (via SH2 and SH3 domain) with TNK2. Interacts (via protein kinase domain) with the tyrosine phosphorylated form of RUNX3 (via runt domain). Interacts with TRAF3 (via RING-type zinc finger domain). Interacts with RIGI, MAVS and TBK1. Interacts (via SH2 domain) with RACK1; the interaction is enhanced by tyrosine phosphorylation of RACK1 and inhibits SRC activity. Interacts (via SH2 domain) with the 'Tyr-402' phosphorylated form of PTK2B/PYK2. Interacts (via SH2 domain) with FLT3 (tyrosine phosphorylated). Identified in a complex containing FGFR4, NCAM1, CDH2, PLCG1, FRS2, SRC, SHC1, GAP43 and CTTN. Interacts with EPHB1; activates the MAPK/ERK cascade to regulate cell migration. Interacts with ERBB2 and STAT1. Interacts with PDGFRA (tyrosine phosphorylated). Interacts with CSF1R. Interacts (via SH2 domain) with the 'Tyr-9' phosphorylated form of PDPK1. Interacts with DDR2. Interacts with AMOTL2; this interaction regulates the translocation of phosphorylated SRC to peripheral cell-matrix adhesion sites. Interacts with DDR1 and DAB2. Interacts with TRAP1. Interacts with CBLC; the interaction is enhanced when SRC is phosphorylated at 'Tyr-424'. Interacts with ARHGEF5. Interacts (via cytoplasmic domain) with CEACAM1 (via SH2 domain); this interaction is regulated by trans-homophilic cell adhesion. Interacts with MPP2. Interacts with PRR7. Interacts (via kinase domain and to a lesser extent the SH2 domain) directly with PDLIM4; this interaction results in PTPN13-mediated dephosphorylation of this protein leading to its inactivation. Interacts with P85 (PIK3R1 or PIK3R2). Interacts with HNRNPA2B1. Interacts with IL6ST/gp130. Interacts (via SH3 domain) with PELP1 in the presence of 17-beta-estradiol. Interacts with AMBRA1. In terms of processing, myristoylated at Gly-2, and this is essential for targeting to membranes. Dephosphorylated at Tyr-529 by PTPRJ. Phosphorylated on Tyr-529 by c-Src kinase (CSK). The phosphorylated form is termed pp60c-src. Dephosphorylated by PTPRJ at Tyr-418. Normally maintained in an inactive conformation with the SH2 domain engaged with Tyr-529, the SH3 domain engaged with the SH2-kinase linker, and Tyr-418 dephosphorylated. Dephosphorylation of Tyr-529 as a result of protein tyrosine phosphatase (PTP) action disrupts the intramolecular interaction between the SH2 domain and Tyr-529, Tyr-418 can then become autophosphorylated, resulting in SRC activation. Phosphorylation of Tyr-529 by CSK allows this interaction to reform, resulting in SRC inactivation. CDK5-mediated phosphorylation at Ser-74 targets SRC to ubiquitin-dependent degradation and thus leads to cytoskeletal reorganization. Phosphorylated by PTK2/FAK1; this enhances kinase activity. Phosphorylated by PTK2B/PYK2; this enhances kinase activity. Upon activation of IL6ST by IL6, Tyr-418 is phosphorylated and Tyr-529 dephosphorylated. Post-translationally, displays reduced levels of autophosphorylation at Tyr-418 compared to isoform 2. In terms of processing, displays enhanced levels of autophosphorylation at Tyr-418 compared to isoform 1. S-nitrosylation is important for activation of its kinase activity. Post-translationally, ubiquitinated in response to CDK5-mediated phosphorylation. Ubiquitination mediated by CBLC requires SRC autophosphorylation at Tyr-418 and may lead to lysosomal degradation.

It is found in the cell membrane. It localises to the mitochondrion inner membrane. The protein resides in the nucleus. The protein localises to the cytoplasm. Its subcellular location is the cytoskeleton. It is found in the perinuclear region. It localises to the cell junction. The protein resides in the focal adhesion. The catalysed reaction is L-tyrosyl-[protein] + ATP = O-phospho-L-tyrosyl-[protein] + ADP + H(+). Its activity is regulated as follows. Phosphorylation by CSK at Tyr-529 inhibits kinase activity. Inhibitory phosphorylation at Tyr-529 is enhanced by heme. Further phosphorylation by CDK1 partially reactivates CSK-inactivated SRC and facilitates complete reactivation by protein tyrosine phosphatase PTPRC. Integrin engagement stimulates kinase activity. Phosphorylation by PTK2/FAK1 enhances kinase activity. Butein and pseudosubstrate-based peptide inhibitors like CIYKYYF act as inhibitors. Phosphorylation at Tyr-418 increases kinase activity. Non-receptor protein tyrosine kinase which is activated following engagement of many different classes of cellular receptors including immune response receptors, integrins and other adhesion receptors, receptor protein tyrosine kinases, G protein-coupled receptors as well as cytokine receptors. Participates in signaling pathways that control a diverse spectrum of biological activities including gene transcription, immune response, cell adhesion, cell cycle progression, apoptosis, migration, and transformation. Due to functional redundancy between members of the SRC kinase family, identification of the specific role of each SRC kinase is very difficult. SRC appears to be one of the primary kinases activated following engagement of receptors and plays a role in the activation of other protein tyrosine kinase (PTK) families. Receptor clustering or dimerization leads to recruitment of SRC to the receptor complexes where it phosphorylates the tyrosine residues within the receptor cytoplasmic domains. Plays an important role in the regulation of cytoskeletal organization through phosphorylation of specific substrates such as AFAP1. Phosphorylation of AFAP1 allows the SRC SH2 domain to bind AFAP1 and to localize to actin filaments. Cytoskeletal reorganization is also controlled through the phosphorylation of cortactin (CTTN). When cells adhere via focal adhesions to the extracellular matrix, signals are transmitted by integrins into the cell resulting in tyrosine phosphorylation of a number of focal adhesion proteins, including PTK2/FAK1 and paxillin (PXN). In addition to phosphorylating focal adhesion proteins, SRC is also active at the sites of cell-cell contact adherens junctions and phosphorylates substrates such as beta-catenin (CTNNB1), delta-catenin (CTNND1), and plakoglobin (JUP). Another type of cell-cell junction, the gap junction, is also a target for SRC, which phosphorylates connexin-43 (GJA1). SRC is implicated in regulation of pre-mRNA-processing and phosphorylates RNA-binding proteins such as KHDRBS1. Phosphorylates PKP3 at 'Tyr-195' in response to reactive oxygen species, which may cause the release of PKP3 from desmosome cell junctions into the cytoplasm. Also plays a role in PDGF-mediated tyrosine phosphorylation of both STAT1 and STAT3, leading to increased DNA binding activity of these transcription factors. Involved in the RAS pathway through phosphorylation of RASA1 and RASGRF1. Plays a role in EGF-mediated calcium-activated chloride channel activation. Required for epidermal growth factor receptor (EGFR) internalization through phosphorylation of clathrin heavy chain (CLTC and CLTCL1) at 'Tyr-1477'. Involved in beta-arrestin (ARRB1 and ARRB2) desensitization through phosphorylation and activation of GRK2, leading to beta-arrestin phosphorylation and internalization. Has a critical role in the stimulation of the CDK20/MAPK3 mitogen-activated protein kinase cascade by epidermal growth factor. Might be involved not only in mediating the transduction of mitogenic signals at the level of the plasma membrane but also in controlling progression through the cell cycle via interaction with regulatory proteins in the nucleus. Plays an important role in osteoclastic bone resorption in conjunction with PTK2B/PYK2. Both the formation of a SRC-PTK2B/PYK2 complex and SRC kinase activity are necessary for this function. Recruited to activated integrins by PTK2B/PYK2, thereby phosphorylating CBL, which in turn induces the activation and recruitment of phosphatidylinositol 3-kinase to the cell membrane in a signaling pathway that is critical for osteoclast function. Promotes energy production in osteoclasts by activating mitochondrial cytochrome C oxidase. Phosphorylates DDR2 on tyrosine residues, thereby promoting its subsequent autophosphorylation. Phosphorylates RUNX3 and COX2 on tyrosine residues, TNK2 on 'Tyr-284' and CBL on 'Tyr-738'. Enhances RIGI-elicited antiviral signaling. Phosphorylates PDPK1 at 'Tyr-9', 'Tyr-373' and 'Tyr-376'. Phosphorylates BCAR1 at 'Tyr-226'. Phosphorylates CBLC at multiple tyrosine residues, phosphorylation at 'Tyr-341' activates CBLC E3 activity. Phosphorylates synaptic vesicle protein synaptophysin (SYP). Involved in anchorage-independent cell growth. Required for podosome formation. Mediates IL6 signaling by activating YAP1-NOTCH pathway to induce inflammation-induced epithelial regeneration. Phosphorylates OTUB1, promoting deubiquitination of RPTOR. Its function is as follows. Non-receptor protein tyrosine kinase which phosphorylates synaptophysin with high affinity. In terms of biological role, non-receptor protein tyrosine kinase which shows higher basal kinase activity than isoform 1, possibly due to weakened intramolecular interactions which enhance autophosphorylation of Tyr-418 and subsequent activation. The SH3 domain shows reduced affinity with the linker sequence between the SH2 and kinase domains which may account for the increased basal activity. Displays altered substrate specificity compared to isoform 1, showing weak affinity for synaptophysin and for peptide substrates containing class I or class II SH3 domain-binding motifs. Plays a role in L1CAM-mediated neurite elongation, possibly by acting downstream of L1CAM to drive cytoskeletal rearrangements involved in neurite outgrowth. The chain is Proto-oncogene tyrosine-protein kinase Src from Mus musculus (Mouse).